The primary structure comprises 263 residues: Antigen 10-3 (263 aa).

The signal sequence occupies residues 1-21 (MNIYLIGILCIVGLIISQGST). Residues 70-207 (GNKKDKQPTQ…QINDGTSDKP (138 aa)) form a disordered region. The segment covering 78–90 (TQKTTPKPTTPKQ) has biased composition (low complexity). Repeat copies occupy residues 81–107 (TTPK…TIKR), 108–134 (TTPK…TIKR), 135–161 (TTPK…TIKR), 162–188 (TTPK…TIKR), and 189–206 (TTPK…TSDK). The 5 X 27 AA tandem repeats stretch occupies residues 81–189 (TTPKPTTPKQ…TSDTHTIKRT (109 aa)). Composition is skewed to basic and acidic residues over residues 95–104 (TSDKTSDTHT), 122–131 (TSDKTSDTHT), 149–158 (TSDKTSDTHT), and 176–185 (TSDKTSDTHT).

This chain is Antigen 10-3, found in Schistosoma mansoni (Blood fluke).